Consider the following 145-residue polypeptide: Peptide methionine sulfoxide reductase MsrB (145 aa).

Residues 6 to 129 (KNERLKQLTD…NSAALRFIPV (124 aa)) enclose the MsrB domain. Cys118 (nucleophile) is an active-site residue.

The protein belongs to the MsrB Met sulfoxide reductase family.

It catalyses the reaction L-methionyl-[protein] + [thioredoxin]-disulfide + H2O = L-methionyl-(R)-S-oxide-[protein] + [thioredoxin]-dithiol. The protein is Peptide methionine sulfoxide reductase MsrB of Listeria welshimeri serovar 6b (strain ATCC 35897 / DSM 20650 / CCUG 15529 / CIP 8149 / NCTC 11857 / SLCC 5334 / V8).